Reading from the N-terminus, the 272-residue chain is Shikimate dehydrogenase (NADP(+)) (272 aa).

Residues 14–16 (SKS) and threonine 61 each bind shikimate. The active-site Proton acceptor is the lysine 65. NADP(+) is bound at residue glutamate 77. Shikimate-binding residues include asparagine 86 and aspartate 102. NADP(+) is bound by residues 126-130 (GAGGA), 149-154 (NRTVSR), and methionine 213. Tyrosine 215 is a binding site for shikimate. Position 237 (glycine 237) interacts with NADP(+).

This sequence belongs to the shikimate dehydrogenase family. Homodimer.

The catalysed reaction is shikimate + NADP(+) = 3-dehydroshikimate + NADPH + H(+). It functions in the pathway metabolic intermediate biosynthesis; chorismate biosynthesis; chorismate from D-erythrose 4-phosphate and phosphoenolpyruvate: step 4/7. Functionally, involved in the biosynthesis of the chorismate, which leads to the biosynthesis of aromatic amino acids. Catalyzes the reversible NADPH linked reduction of 3-dehydroshikimate (DHSA) to yield shikimate (SA). This Escherichia coli O139:H28 (strain E24377A / ETEC) protein is Shikimate dehydrogenase (NADP(+)).